A 266-amino-acid polypeptide reads, in one-letter code: Manganese catalase (266 aa).

A Mn(2+)-binding site is contributed by glutamate 35. The Ca(2+) site is built by aspartate 57 and aspartate 61. Positions 66, 69, 148, and 181 each coordinate Mn(2+). Ca(2+)-binding residues include asparagine 218, serine 220, and glycine 222. The tract at residues 243-266 (ENPEAMGGIPHIKPGDPRLHNHQG) is disordered. Basic and acidic residues predominate over residues 255 to 266 (KPGDPRLHNHQG).

Belongs to the manganese catalase family. Homohexamer. It depends on Ca(2+) as a cofactor. Requires Mn(2+) as cofactor.

The catalysed reaction is 2 H2O2 = O2 + 2 H2O. In terms of biological role, catalyzes the decomposition of hydrogen peroxide into water and oxygen. The protein is Manganese catalase of Lactiplantibacillus plantarum (Lactobacillus plantarum).